The primary structure comprises 494 residues: MGTTKVTPYLIFATSVAAIGSFQFGYNTGVINAPEMIIRDFLNYTLDEKLDEPPSRLLLTNLWSLSVAIFSVGGMIGSFSVGLFNRFGRRNSMLIVNLLAVIGGCLMGFCKISESVEMLILGRLVIGVFCGLCTGFVPMYIGEISPTALRGAFGTLNQLGIVIGILVAQIFGLEIILGSEVLWPVLLGFTIIPAILQSAALPFCPESPRFLLINKKEEDEAKQILQRLWGTQDVAQDIQEMKEESARMAQEKQVTVLELFRAPSYRQPIIISIVLQLSQQLSGINAVFYYSTGIFKDAGVKEPIYATIGAGVVNTIFTIVSVFLVERAGRRTLHLIGLGGMALCSVLMTVSLLLKDKYDTMSLVCIAAILIYVAFFEIGPGPIPWFIVAELFSQGPRPAAMAVAGCSNWTSNFLVGLLFPSAAYYLGAYVFVIFAVFLVAFFIFTFFKVPETRGRTFEDITRAFEGQAAEANKLGKGPTMEMNSIQPIETTTHV.

Residues 1–10 (MGTTKVTPYL) are Cytoplasmic-facing. Residues 11-32 (IFATSVAAIGSFQFGYNTGVIN) form a helical membrane-spanning segment. Over 33-64 (APEMIIRDFLNYTLDEKLDEPPSRLLLTNLWS) the chain is Extracellular. N-linked (GlcNAc...) asparagine glycosylation is present at Asn43. Residues 65 to 84 (LSVAIFSVGGMIGSFSVGLF) traverse the membrane as a helical segment. The Cytoplasmic segment spans residues 85–89 (NRFGR). Residues 90-110 (RNSMLIVNLLAVIGGCLMGFC) form a helical membrane-spanning segment. The Extracellular segment spans residues 111–117 (KISESVE). The chain crosses the membrane as a helical span at residues 118 to 141 (MLILGRLVIGVFCGLCTGFVPMYI). Residues 142 to 152 (GEISPTALRGA) lie on the Cytoplasmic side of the membrane. Residues 153–173 (FGTLNQLGIVIGILVAQIFGL) traverse the membrane as a helical segment. Gln158 contacts D-glucose. At 174-182 (EIILGSEVL) the chain is on the extracellular side. A helical membrane pass occupies residues 183-203 (WPVLLGFTIIPAILQSAALPF). Topologically, residues 204 to 268 (CPESPRFLLI…LFRAPSYRQP (65 aa)) are cytoplasmic. A Phosphothreonine modification is found at Thr231. The chain crosses the membrane as a helical span at residues 269–289 (IIISIVLQLSQQLSGINAVFY). Residues 276–278 (QLS) are important for selectivity against fructose. Residues 279 to 280 (QQ) and Asn285 each bind D-glucose. Topologically, residues 290 to 303 (YSTGIFKDAGVKEP) are extracellular. The helical transmembrane segment at 304-324 (IYATIGAGVVNTIFTIVSVFL) threads the bilayer. D-glucose is bound at residue Asn314. At 325–330 (VERAGR) the chain is on the cytoplasmic side. Residues 331 to 351 (RTLHLIGLGGMALCSVLMTVS) form a helical membrane-spanning segment. Topologically, residues 352–362 (LLLKDKYDTMS) are extracellular. The helical transmembrane segment at 363 to 388 (LVCIAAILIYVAFFEIGPGPIPWFIV) threads the bilayer. D-glucose-binding residues include Glu377 and Trp385. Topologically, residues 389 to 398 (AELFSQGPRP) are cytoplasmic. A helical transmembrane segment spans residues 399 to 419 (AAMAVAGCSNWTSNFLVGLLF). Residues 420-428 (PSAAYYLGA) lie on the Extracellular side of the membrane. A helical membrane pass occupies residues 429 to 449 (YVFVIFAVFLVAFFIFTFFKV). The Cytoplasmic portion of the chain corresponds to 450–494 (PETRGRTFEDITRAFEGQAAEANKLGKGPTMEMNSIQPIETTTHV). At Ser484 the chain carries Phosphoserine. Residue Thr491 is modified to Phosphothreonine.

It belongs to the major facilitator superfamily. Sugar transporter (TC 2.A.1.1) family. Glucose transporter subfamily. Interacts with SMIM43; the interaction may promote SLC2A3-mediated glucose transport to meet the energy needs of mesendoderm differentiation. As to expression, detected in stomach, placenta, lung and brain.

The protein resides in the cell membrane. It localises to the perikaryon. It is found in the cell projection. The catalysed reaction is D-glucose(out) = D-glucose(in). The enzyme catalyses D-galactose(in) = D-galactose(out). Deoxyglucose transport is inhibited by D-glucose, D-galactose and maltose. Galactose transport is inhibited by D-glucose and maltose. Its function is as follows. Facilitative glucose transporter. Can also mediate the uptake of various other monosaccharides across the cell membrane. Mediates the uptake of glucose, 2-deoxyglucose, galactose, mannose, xylose and fucose, and probably also dehydroascorbate. Does not mediate fructose transport. Required for mesendoderm differentiation. This is Solute carrier family 2, facilitated glucose transporter member 3 from Oryctolagus cuniculus (Rabbit).